Here is a 1173-residue protein sequence, read N- to C-terminus: DNA polymerase catalytic subunit (1173 aa).

Disordered stretches follow at residues 554-625 (PSLP…SASG) and 1123-1144 (EGPG…PPRK). Residues 564–578 (GGDGAGLEGGDGGTA) are compositionally biased toward gly residues. Acidic residues predominate over residues 591–606 (DGEDEDDPEGGDEGEN). Residues 607-618 (GECRENGLEKEG) are compositionally biased toward basic and acidic residues. Positions 1123 to 1138 (EGPGRGEGLGVGGGEG) are enriched in gly residues.

This sequence belongs to the DNA polymerase type-B family.

Its subcellular location is the host nucleus. The catalysed reaction is DNA(n) + a 2'-deoxyribonucleoside 5'-triphosphate = DNA(n+1) + diphosphate. The sequence is that of DNA polymerase catalytic subunit (UL54) from Rattus.